We begin with the raw amino-acid sequence, 332 residues long: Adenosine deaminase (332 aa).

Zn(2+) is bound by residues His-12 and His-14. The substrate site is built by His-14, Asp-16, and Gly-170. His-197 contacts Zn(2+). Glu-200 (proton donor) is an active-site residue. A Zn(2+)-binding site is contributed by Asp-278. Asp-279 provides a ligand contact to substrate.

It belongs to the metallo-dependent hydrolases superfamily. Adenosine and AMP deaminases family. Adenosine deaminase subfamily. It depends on Zn(2+) as a cofactor.

It carries out the reaction adenosine + H2O + H(+) = inosine + NH4(+). It catalyses the reaction 2'-deoxyadenosine + H2O + H(+) = 2'-deoxyinosine + NH4(+). Catalyzes the hydrolytic deamination of adenosine and 2-deoxyadenosine. The polypeptide is Adenosine deaminase (Erwinia tasmaniensis (strain DSM 17950 / CFBP 7177 / CIP 109463 / NCPPB 4357 / Et1/99)).